We begin with the raw amino-acid sequence, 910 residues long: Protein translocase subunit SecA (910 aa).

ATP contacts are provided by residues Gln87, 105–109 (GEGKT), and Asp501. Zn(2+) contacts are provided by Cys894, Cys896, Cys905, and His906.

This sequence belongs to the SecA family. In terms of assembly, monomer and homodimer. Part of the essential Sec protein translocation apparatus which comprises SecA, SecYEG and auxiliary proteins SecDF-YajC and YidC. Requires Zn(2+) as cofactor.

The protein resides in the cell inner membrane. It is found in the cytoplasm. The enzyme catalyses ATP + H2O + cellular proteinSide 1 = ADP + phosphate + cellular proteinSide 2.. In terms of biological role, part of the Sec protein translocase complex. Interacts with the SecYEG preprotein conducting channel. Has a central role in coupling the hydrolysis of ATP to the transfer of proteins into and across the cell membrane, serving both as a receptor for the preprotein-SecB complex and as an ATP-driven molecular motor driving the stepwise translocation of polypeptide chains across the membrane. This chain is Protein translocase subunit SecA, found in Acidiphilium cryptum (strain JF-5).